The primary structure comprises 428 residues: L-glutamyl-[BtrI acyl-carrier protein] decarboxylase (428 aa).

The residue at position 49 (K49) is an N6-(pyridoxal phosphate)lysine. Pyridoxal 5'-phosphate contacts are provided by residues G228, 269-272 (ESGR), and Y375. Positions 272 and 375 each coordinate substrate.

This sequence belongs to the Orn/Lys/Arg decarboxylase class-II family. In terms of assembly, homodimer. Requires pyridoxal 5'-phosphate as cofactor.

It catalyses the reaction gamma-L-glutamyl-[BtrI ACP] + H(+) = 4-aminobutanoyl-[BtrI ACP] + CO2. Its pathway is antibiotic biosynthesis; butirosin biosynthesis. Functionally, pyridoxal phosphate-dependent decarboxylase that catalyzes 1 step in the biosynthesis of the side chain of the aminoglycoside antibiotics in the biosynthetic pathway of butirosin. Able to decarboxylate L-ornithine, L-arginine, L-lysine, but not L-glutamate or any D-amino acids. Has low activity with substrates not bound to an acyl-carrier protein. This is L-glutamyl-[BtrI acyl-carrier protein] decarboxylase (btrK) from Niallia circulans (Bacillus circulans).